Here is a 24-residue protein sequence, read N- to C-terminus: Unknown protein 6 (24 aa).

The polypeptide is Unknown protein 6 (Lonomia obliqua (Moth)).